A 376-amino-acid polypeptide reads, in one-letter code: Copper-containing nitrite reductase (376 aa).

The segment at residues 1–33 (MSEQFQMTRRSMLAGAAIAGAVTPLIGAVSAHA) is a signal peptide (tat-type signal). 2 Plastocyanin-like domains span residues 98–193 (MTFN…IMVL) and 258–359 (GAVG…FAVT). Positions 131, 136, 171, 172, 181, 186, and 342 each coordinate Cu cation.

It belongs to the multicopper oxidase family. As to quaternary structure, homotrimer. It depends on Cu(2+) as a cofactor. Cu(+) serves as cofactor. Requires FAD as cofactor. In terms of processing, predicted to be exported by the Tat system. The position of the signal peptide cleavage has not been experimentally proven.

The protein resides in the periplasm. The catalysed reaction is nitric oxide + Fe(III)-[cytochrome c] + H2O = Fe(II)-[cytochrome c] + nitrite + 2 H(+). It participates in nitrogen metabolism; nitrate reduction (denitrification); dinitrogen from nitrate: step 2/4. In Rhizobium meliloti (strain 1021) (Ensifer meliloti), this protein is Copper-containing nitrite reductase (nirK).